The following is a 467-amino-acid chain: Gamma-aminobutyric acid receptor subunit gamma-3 (467 aa).

The signal sequence occupies residues 1–17 (MAAKLLLLLCLFSGLHA). The Extracellular portion of the chain corresponds to 18–256 (RSRRVEEDDS…FELSRRMGYF (239 aa)). An N-linked (GlcNAc...) asparagine glycan is attached at Asn110. The cysteines at positions 171 and 185 are disulfide-linked. N-linked (GlcNAc...) asparagine glycosylation is present at Asn228. The helical transmembrane segment at 257-277 (TIQTYIPCILTVVLSWVSFWI) threads the bilayer. Residues 278–283 (KKDATP) are Cytoplasmic-facing. The helical transmembrane segment at 284-303 (ARTTLGITTVLTMTTLSTIA) threads the bilayer. Residues 304 to 311 (RKSLPRVS) lie on the Extracellular side of the membrane. A helical transmembrane segment spans residues 312-332 (YVTAMDLFVTVCFLFVFAALM). Residues 333 to 446 (EYATLNYYSS…DVSELDSYSR (114 aa)) lie on the Cytoplasmic side of the membrane. Residues 447-467 (VFFPTSFLLFNLVYWVGYLYL) traverse the membrane as a helical segment.

This sequence belongs to the ligand-gated ion channel (TC 1.A.9) family. Gamma-aminobutyric acid receptor (TC 1.A.9.5) subfamily. GABRG3 sub-subfamily. As to quaternary structure, heteropentamer, formed by a combination of alpha (GABRA1-6), beta (GABRB1-3), gamma (GABRG1-3), delta (GABRD), epsilon (GABRE), rho (GABRR1-3), pi (GABRP) and theta (GABRQ) chains, each subunit exhibiting distinct physiological and pharmacological properties. In terms of processing, may be palmitoylated. As to expression, expressed in brain.

It is found in the postsynaptic cell membrane. Its subcellular location is the cell membrane. It carries out the reaction chloride(in) = chloride(out). Allosterically potentiated by alphaxalone. Allosterically inhibited by pregnenolone sulfate. Inhibited by zinc and lanthanum. Gamma subunit of the heteropentameric ligand-gated chloride channel gated by gamma-aminobutyric acid (GABA), a major inhibitory neurotransmitter in the brain. GABA-gated chloride channels, also named GABA(A) receptors (GABAAR), consist of five subunits arranged around a central pore and contain GABA active binding site(s) located at the alpha and beta subunit interface(s). When activated by GABA, GABAARs selectively allow the flow of chloride across the cell membrane down their electrochemical gradient. This chain is Gamma-aminobutyric acid receptor subunit gamma-3, found in Rattus norvegicus (Rat).